The following is a 138-amino-acid chain: Membrane protein P8A7 (138 aa).

4 helical membrane-spanning segments follow: residues 12 to 30 (ILVI…YLFV), 32 to 56 (GLFH…IVLL), 71 to 90 (YTYW…LILG), and 93 to 118 (GFFL…LLGC).

Its subcellular location is the membrane. This is Membrane protein P8A7 (pmpA) from Dictyostelium discoideum (Social amoeba).